Reading from the N-terminus, the 232-residue chain is 2-C-methyl-D-erythritol 4-phosphate cytidylyltransferase (232 aa).

The protein belongs to the IspD/TarI cytidylyltransferase family. IspD subfamily.

It catalyses the reaction 2-C-methyl-D-erythritol 4-phosphate + CTP + H(+) = 4-CDP-2-C-methyl-D-erythritol + diphosphate. The protein operates within isoprenoid biosynthesis; isopentenyl diphosphate biosynthesis via DXP pathway; isopentenyl diphosphate from 1-deoxy-D-xylulose 5-phosphate: step 2/6. Catalyzes the formation of 4-diphosphocytidyl-2-C-methyl-D-erythritol from CTP and 2-C-methyl-D-erythritol 4-phosphate (MEP). The protein is 2-C-methyl-D-erythritol 4-phosphate cytidylyltransferase of Shewanella frigidimarina (strain NCIMB 400).